Here is a 377-residue protein sequence, read N- to C-terminus: Glutamate 5-kinase (377 aa).

Residue Lys-18 participates in ATP binding. 3 residues coordinate substrate: Ser-55, Asp-142, and Asn-154. ATP is bound by residues 174 to 175 (SD) and 216 to 222 (TGGMKSK). The PUA domain occupies 281 to 359 (QGEVVVDAGA…REIEALLGYK (79 aa)).

It belongs to the glutamate 5-kinase family.

The protein resides in the cytoplasm. It carries out the reaction L-glutamate + ATP = L-glutamyl 5-phosphate + ADP. Its pathway is amino-acid biosynthesis; L-proline biosynthesis; L-glutamate 5-semialdehyde from L-glutamate: step 1/2. Functionally, catalyzes the transfer of a phosphate group to glutamate to form L-glutamate 5-phosphate. This chain is Glutamate 5-kinase, found in Meiothermus ruber.